Here is a 150-residue protein sequence, read N- to C-terminus: Large ribosomal subunit protein uL13 (150 aa).

The protein belongs to the universal ribosomal protein uL13 family. As to quaternary structure, part of the 50S ribosomal subunit.

In terms of biological role, this protein is one of the early assembly proteins of the 50S ribosomal subunit, although it is not seen to bind rRNA by itself. It is important during the early stages of 50S assembly. This chain is Large ribosomal subunit protein uL13, found in Persephonella marina (strain DSM 14350 / EX-H1).